Here is a 33-residue protein sequence, read N- to C-terminus: Neutrophil defensin 3 (33 aa).

3 disulfides stabilise this stretch: cysteine 3-cysteine 31, cysteine 5-cysteine 20, and cysteine 10-cysteine 30.

It belongs to the alpha-defensin family.

The protein resides in the secreted. Functionally, anti-fungal and bactericidal activity, greater against Gram-positive bacteria. This chain is Neutrophil defensin 3, found in Mesocricetus auratus (Golden hamster).